Reading from the N-terminus, the 533-residue chain is Probable fucosyltransferase 5 (533 aa).

Topologically, residues 1–13 (MYQKFQISGKIVK) are cytoplasmic. A helical; Signal-anchor for type II membrane protein transmembrane segment spans residues 14-34 (TLGLKMKVLIAVSFGSLLFIL). Topologically, residues 35-533 (SYSNNFNNKL…YGGLKLYDEF (499 aa)) are lumenal. 5 N-linked (GlcNAc...) asparagine glycosylation sites follow: asparagine 202, asparagine 227, asparagine 374, asparagine 396, and asparagine 475.

This sequence belongs to the glycosyltransferase 37 family. In terms of tissue distribution, expressed in roots, leaves, flowers and siliques.

It is found in the golgi apparatus. It localises to the golgi stack membrane. The protein operates within protein modification; protein glycosylation. May be involved in cell wall biosynthesis. May act as a fucosyltransferase. This chain is Probable fucosyltransferase 5 (FUT5), found in Arabidopsis thaliana (Mouse-ear cress).